The chain runs to 421 residues: 4-hydroxy-3-methylbut-2-en-1-yl diphosphate synthase (flavodoxin) (421 aa).

Residues C311, C314, C357, and E364 each contribute to the [4Fe-4S] cluster site.

The protein belongs to the IspG family. [4Fe-4S] cluster is required as a cofactor.

The catalysed reaction is (2E)-4-hydroxy-3-methylbut-2-enyl diphosphate + oxidized [flavodoxin] + H2O + 2 H(+) = 2-C-methyl-D-erythritol 2,4-cyclic diphosphate + reduced [flavodoxin]. The protein operates within isoprenoid biosynthesis; isopentenyl diphosphate biosynthesis via DXP pathway; isopentenyl diphosphate from 1-deoxy-D-xylulose 5-phosphate: step 5/6. In terms of biological role, converts 2C-methyl-D-erythritol 2,4-cyclodiphosphate (ME-2,4cPP) into 1-hydroxy-2-methyl-2-(E)-butenyl 4-diphosphate. This is 4-hydroxy-3-methylbut-2-en-1-yl diphosphate synthase (flavodoxin) from Xanthomonas oryzae pv. oryzae (strain MAFF 311018).